Consider the following 512-residue polypeptide: Glutathione-binding protein GsiB (512 aa).

Residues 1–26 form the signal peptide; it reads MARAVHRSGLVALGIATALMASCAFA.

It belongs to the bacterial solute-binding protein 5 family. As to quaternary structure, the complex is composed of two ATP-binding proteins (GsiA), two transmembrane proteins (GsiC and GsiD) and a solute-binding protein (GsiB).

It localises to the periplasm. Its function is as follows. Part of the ABC transporter complex GsiABCD involved in glutathione import. Binds glutathione. This is Glutathione-binding protein GsiB from Shigella flexneri.